A 420-amino-acid chain; its full sequence is uncharacterized protein (420 aa).

The next 6 membrane-spanning stretches (helical) occupy residues 26 to 46 (IFLLLVILVFVPIGFVFQSVI), 66 to 86 (SAIKSITLLFLLLLFVNWFTF), 231 to 251 (VILAFYVTQKILIMILFATVL), 276 to 296 (IPVNVFAMTIAIAIRFVPSLL), 317 to 337 (GFLVKMRSLSSLVVPMVSIAF), and 369 to 389 (IDILALFLVFAWFVVIIFLTI).

The protein belongs to the CbiQ family.

The protein resides in the cell membrane. This is an uncharacterized protein from Mycoplasma genitalium (strain ATCC 33530 / DSM 19775 / NCTC 10195 / G37) (Mycoplasmoides genitalium).